Here is a 406-residue protein sequence, read N- to C-terminus: Pyridinium-3,5-bisthiocarboxylic acid mononucleotide nickel insertion protein (406 aa).

It belongs to the LarC family.

The catalysed reaction is Ni(II)-pyridinium-3,5-bisthiocarboxylate mononucleotide = pyridinium-3,5-bisthiocarboxylate mononucleotide + Ni(2+). Involved in the biosynthesis of a nickel-pincer cofactor ((SCS)Ni(II) pincer complex). Binds Ni(2+), and functions in nickel delivery to pyridinium-3,5-bisthiocarboxylic acid mononucleotide (P2TMN), to form the mature cofactor. Is thus probably required for the activation of nickel-pincer cofactor-dependent enzymes. The polypeptide is Pyridinium-3,5-bisthiocarboxylic acid mononucleotide nickel insertion protein (Akkermansia muciniphila (strain ATCC BAA-835 / DSM 22959 / JCM 33894 / BCRC 81048 / CCUG 64013 / CIP 107961 / Muc)).